Here is a 233-residue protein sequence, read N- to C-terminus: uncharacterized protein (233 aa).

This sequence belongs to the LutC/YkgG family.

This is an uncharacterized protein from Neisseria meningitidis serogroup B (strain ATCC BAA-335 / MC58).